Reading from the N-terminus, the 414-residue chain is Peptide chain release factor subunit 1 (414 aa).

The protein belongs to the eukaryotic release factor 1 family. In terms of assembly, heterodimer of two subunits, one of which binds GTP.

Its subcellular location is the cytoplasm. Directs the termination of nascent peptide synthesis (translation) in response to the termination codons UAA, UAG and UGA. The polypeptide is Peptide chain release factor subunit 1 (prf1) (Pyrococcus abyssi (strain GE5 / Orsay)).